We begin with the raw amino-acid sequence, 421 residues long: Serine protease HTRA2, mitochondrial (421 aa).

The chain crosses the membrane as a helical span at residues 63 to 81; that stretch reads VIRFFVPFSLGALASTMVA. Positions 74–77 match the IAP-binding motif; sequence ALAS. The interval 138-301 is serine protease; the sequence is SNGSGFVIEQ…IPIDYVKVFL (164 aa). Catalysis depends on charge relay system residues H156, D188, and S265. The region spanning 324–409 is the PDZ domain; sequence MGITMLTLTP…ELDIVILRGV (86 aa).

This sequence belongs to the peptidase S1C family. As to quaternary structure, interacts with th/DIAP1 (via BIR 2 domain).

The protein localises to the mitochondrion intermembrane space. The protein resides in the mitochondrion membrane. It catalyses the reaction Cleavage of non-polar aliphatic amino-acids at the P1 position, with a preference for Val, Ile and Met. At the P2 and P3 positions, Arg is selected most strongly with a secondary preference for other hydrophilic residues.. In terms of biological role, serine protease that shows proteolytic activity against a non-specific substrate beta-casein. Promotes or induces cell death either by direct binding to and inhibition of BIRC proteins (also called inhibitor of apoptosis proteins, IAPs), leading to an increase in caspase activity, or by a BIRC inhibition-independent, caspase-independent and serine protease activity-dependent mechanism. Can antagonize antiapoptotic activity of th/Diap1 by directly inducing the degradation of th/Diap1. In Drosophila virilis (Fruit fly), this protein is Serine protease HTRA2, mitochondrial.